We begin with the raw amino-acid sequence, 338 residues long: Glycerol-3-phosphate dehydrogenase [NAD(P)+] (338 aa).

Ser-13, Trp-14, and Lys-108 together coordinate NADPH. Positions 108, 139, and 141 each coordinate sn-glycerol 3-phosphate. Ala-143 serves as a coordination point for NADPH. The sn-glycerol 3-phosphate site is built by Lys-194, Asp-247, Ser-257, Arg-258, and Asn-259. The Proton acceptor role is filled by Lys-194. Arg-258 lines the NADPH pocket. Positions 282 and 284 each coordinate NADPH.

The protein resides in the cytoplasm. The catalysed reaction is sn-glycerol 3-phosphate + NAD(+) = dihydroxyacetone phosphate + NADH + H(+). It carries out the reaction sn-glycerol 3-phosphate + NADP(+) = dihydroxyacetone phosphate + NADPH + H(+). The protein operates within membrane lipid metabolism; glycerophospholipid metabolism. Catalyzes the reduction of the glycolytic intermediate dihydroxyacetone phosphate (DHAP) to sn-glycerol 3-phosphate (G3P), the key precursor for phospholipid synthesis. The protein is Glycerol-3-phosphate dehydrogenase [NAD(P)+] of Streptococcus pyogenes serotype M6 (strain ATCC BAA-946 / MGAS10394).